Consider the following 1001-residue polypeptide: E3 ubiquitin-protein ligase BRE1B (1001 aa).

A disordered region spans residues 1–40; sequence MSGLSNKRAAGDGGSGPPEKKMNREEKTTTTLIEPIRLGG. The segment covering 18–28 has biased composition (basic and acidic residues); it reads PEKKMNREEKT. An N6-acetyllysine modification is found at K20. S42 is modified (phosphoserine). Residues 55–91 adopt a coiled-coil conformation; it reads KNKKLAERLEQRQACEDELRERIEKLEKRQATDDATL. Residues 122 to 142 form a disordered region; sequence TEVPGCQEGLTRDVIPRPDPG. Coiled coils occupy residues 189 to 377 and 437 to 525; these read KAAV…LRSL and LQKK…ASGS. 2 positions are modified to N6-acetyllysine: K355 and K517. The tract at residues 519–647 is disordered; that stretch reads RAQASGSSHC…KAKVEEAKRK (129 aa). Residues 565–576 are compositionally biased toward low complexity; it reads ALLAGATSATSS. Glycyl lysine isopeptide (Lys-Gly) (interchain with G-Cter in SUMO2) cross-links involve residues K578 and K579. 2 positions are modified to phosphoserine: S584 and S585. Composition is skewed to basic and acidic residues over residues 602–619 and 633–647; these read RGRE…EREG and RADR…AKRK. Residues 627-946 are a coiled coil; sequence AASTLSRADR…EEIKEYKARL (320 aa). An RING-type zinc finger spans residues 948–987; sequence CPCCNTRKKDAVLTKCFHVFCFECVRGRYEARQRKCPKCN.

It belongs to the BRE1 family. Component of the RNF20/40 complex (also known as BRE1 complex) probably composed of 2 copies of RNF20/BRE1A and 2 copies of RNF40/BRE1B. Interacts with UBE2E1/UBCH6. Interacts with RB1 and WAC.

Its subcellular location is the nucleus. The enzyme catalyses S-ubiquitinyl-[E2 ubiquitin-conjugating enzyme]-L-cysteine + [acceptor protein]-L-lysine = [E2 ubiquitin-conjugating enzyme]-L-cysteine + N(6)-ubiquitinyl-[acceptor protein]-L-lysine.. Its pathway is protein modification; protein ubiquitination. Component of the RNF20/40 E3 ubiquitin-protein ligase complex that mediates monoubiquitination of 'Lys-120' of histone H2B (H2BK120ub1). H2BK120ub1 gives a specific tag for epigenetic transcriptional activation and is also prerequisite for histone H3 'Lys-4' and 'Lys-79' methylation (H3K4me and H3K79me, respectively). It thereby plays a central role in histone code and gene regulation. The RNF20/40 complex forms a H2B ubiquitin ligase complex in cooperation with the E2 enzyme UBE2A or UBE2B; reports about the cooperation with UBE2E1/UBCH are contradictory. Required for transcriptional activation of Hox genes. This Mus musculus (Mouse) protein is E3 ubiquitin-protein ligase BRE1B (Rnf40).